A 432-amino-acid polypeptide reads, in one-letter code: Adenylosuccinate synthetase (432 aa).

Residues 12-18 (GDEGKGK) and 40-42 (GHT) contribute to the GTP site. The active-site Proton acceptor is the aspartate 13. The Mg(2+) site is built by aspartate 13 and glycine 40. IMP-binding positions include 13–16 (DEGK), 38–41 (NAGH), threonine 128, arginine 142, glutamine 223, threonine 238, and arginine 302. Histidine 41 serves as the catalytic Proton donor. 298-304 (TVTGRPR) serves as a coordination point for substrate. GTP is bound by residues arginine 304, 330–332 (LLD), and 412–414 (SVG).

The protein belongs to the adenylosuccinate synthetase family. In terms of assembly, homodimer. It depends on Mg(2+) as a cofactor.

Its subcellular location is the cytoplasm. The enzyme catalyses IMP + L-aspartate + GTP = N(6)-(1,2-dicarboxyethyl)-AMP + GDP + phosphate + 2 H(+). It participates in purine metabolism; AMP biosynthesis via de novo pathway; AMP from IMP: step 1/2. Its function is as follows. Plays an important role in the de novo pathway of purine nucleotide biosynthesis. Catalyzes the first committed step in the biosynthesis of AMP from IMP. This chain is Adenylosuccinate synthetase, found in Limosilactobacillus reuteri (strain DSM 20016) (Lactobacillus reuteri).